Reading from the N-terminus, the 363-residue chain is 3-isopropylmalate dehydrogenase (363 aa).

77 to 90 serves as a coordination point for NAD(+); sequence GPKWQHLPPDQQPE. Arg-98, Arg-108, Arg-137, and Asp-226 together coordinate substrate. Mg(2+)-binding residues include Asp-226, Asp-250, and Asp-254. An NAD(+)-binding site is contributed by 284-296; it reads GSAPDIAGKNIAN.

The protein belongs to the isocitrate and isopropylmalate dehydrogenases family. LeuB type 1 subfamily. In terms of assembly, homodimer. Mg(2+) is required as a cofactor. Mn(2+) serves as cofactor.

It localises to the cytoplasm. The catalysed reaction is (2R,3S)-3-isopropylmalate + NAD(+) = 4-methyl-2-oxopentanoate + CO2 + NADH. It functions in the pathway amino-acid biosynthesis; L-leucine biosynthesis; L-leucine from 3-methyl-2-oxobutanoate: step 3/4. Catalyzes the oxidation of 3-carboxy-2-hydroxy-4-methylpentanoate (3-isopropylmalate) to 3-carboxy-4-methyl-2-oxopentanoate. The product decarboxylates to 4-methyl-2 oxopentanoate. The protein is 3-isopropylmalate dehydrogenase of Buchnera aphidicola subsp. Pemphigus spyrothecae.